The primary structure comprises 188 residues: 3-deoxy-D-manno-octulosonate 8-phosphate phosphatase KdsC (188 aa).

Asp32 and Asp34 together coordinate Mg(2+). Substrate is bound by residues Asp34, 55–59, Arg63, Arg78, Arg86, and Lys102; that span reads NVRDG. Asp125 serves as a coordination point for Mg(2+).

In terms of assembly, homotetramer. The cofactor is Mg(2+). Co(2+) serves as cofactor.

The catalysed reaction is 3-deoxy-alpha-D-manno-2-octulosonate-8-phosphate + H2O = 3-deoxy-alpha-D-manno-oct-2-ulosonate + phosphate. The protein operates within carbohydrate biosynthesis; 3-deoxy-D-manno-octulosonate biosynthesis; 3-deoxy-D-manno-octulosonate from D-ribulose 5-phosphate: step 3/3. It functions in the pathway bacterial outer membrane biogenesis; lipopolysaccharide biosynthesis. Inhibited by calcium, cadmium, mercury, and copper ions. Catalyzes the hydrolysis of 3-deoxy-D-manno-octulosonate 8-phosphate (KDO 8-P) to 3-deoxy-D-manno-octulosonate (KDO) and inorganic phosphate. This is 3-deoxy-D-manno-octulosonate 8-phosphate phosphatase KdsC from Escherichia coli (strain B / BL21-DE3).